The chain runs to 452 residues: Enolase (452 aa).

Glutamine 167 is a binding site for (2R)-2-phosphoglycerate. Glutamate 209 serves as the catalytic Proton donor. Mg(2+) contacts are provided by aspartate 250, glutamate 307, and aspartate 334. The (2R)-2-phosphoglycerate site is built by lysine 359, arginine 388, serine 389, and lysine 410. Lysine 359 acts as the Proton acceptor in catalysis.

Belongs to the enolase family. The cofactor is Mg(2+).

It localises to the cytoplasm. The protein localises to the secreted. The protein resides in the cell surface. The enzyme catalyses (2R)-2-phosphoglycerate = phosphoenolpyruvate + H2O. It functions in the pathway carbohydrate degradation; glycolysis; pyruvate from D-glyceraldehyde 3-phosphate: step 4/5. In terms of biological role, catalyzes the reversible conversion of 2-phosphoglycerate (2-PG) into phosphoenolpyruvate (PEP). It is essential for the degradation of carbohydrates via glycolysis. This is Enolase from Mesomycoplasma hyopneumoniae (strain 232) (Mycoplasma hyopneumoniae).